The following is a 264-amino-acid chain: 4-hydroxy-tetrahydrodipicolinate reductase (264 aa).

An NAD(+)-binding site is contributed by 9–14 (GCSGRM). Residue Arg36 participates in NADP(+) binding. NAD(+) is bound by residues 100–102 (GTT) and 121–124 (SANM). His154 serves as the catalytic Proton donor/acceptor. His155 serves as a coordination point for (S)-2,3,4,5-tetrahydrodipicolinate. The Proton donor role is filled by Lys158. 164 to 165 (GT) contacts (S)-2,3,4,5-tetrahydrodipicolinate.

Belongs to the DapB family.

It is found in the cytoplasm. The enzyme catalyses (S)-2,3,4,5-tetrahydrodipicolinate + NAD(+) + H2O = (2S,4S)-4-hydroxy-2,3,4,5-tetrahydrodipicolinate + NADH + H(+). It carries out the reaction (S)-2,3,4,5-tetrahydrodipicolinate + NADP(+) + H2O = (2S,4S)-4-hydroxy-2,3,4,5-tetrahydrodipicolinate + NADPH + H(+). It functions in the pathway amino-acid biosynthesis; L-lysine biosynthesis via DAP pathway; (S)-tetrahydrodipicolinate from L-aspartate: step 4/4. In terms of biological role, catalyzes the conversion of 4-hydroxy-tetrahydrodipicolinate (HTPA) to tetrahydrodipicolinate. The chain is 4-hydroxy-tetrahydrodipicolinate reductase from Wolbachia sp. subsp. Brugia malayi (strain TRS).